The primary structure comprises 63 residues: ATP synthase F(0) complex subunit 8 (63 aa).

A helical membrane pass occupies residues 8–24 (TWLLTILSMLLTLFVLF). Lysine 57 bears the N6-acetyllysine mark.

This sequence belongs to the ATPase protein 8 family. As to quaternary structure, component of the ATP synthase complex composed at least of ATP5F1A/subunit alpha, ATP5F1B/subunit beta, ATP5MC1/subunit c (homooctomer), MT-ATP6/subunit a, MT-ATP8/subunit 8, ATP5ME/subunit e, ATP5MF/subunit f, ATP5MG/subunit g, ATP5MK/subunit k, ATP5MJ/subunit j, ATP5F1C/subunit gamma, ATP5F1D/subunit delta, ATP5F1E/subunit epsilon, ATP5PF/subunit F6, ATP5PB/subunit b, ATP5PD/subunit d, ATP5PO/subunit OSCP. ATP synthase complex consists of a soluble F(1) head domain (subunits alpha(3) and beta(3)) - the catalytic core - and a membrane F(0) domain - the membrane proton channel (subunits c, a, 8, e, f, g, k and j). These two domains are linked by a central stalk (subunits gamma, delta, and epsilon) rotating inside the F1 region and a stationary peripheral stalk (subunits F6, b, d, and OSCP). Interacts with PRICKLE3.

It is found in the mitochondrion membrane. Its function is as follows. Subunit 8, of the mitochondrial membrane ATP synthase complex (F(1)F(0) ATP synthase or Complex V) that produces ATP from ADP in the presence of a proton gradient across the membrane which is generated by electron transport complexes of the respiratory chain. ATP synthase complex consist of a soluble F(1) head domain - the catalytic core - and a membrane F(1) domain - the membrane proton channel. These two domains are linked by a central stalk rotating inside the F(1) region and a stationary peripheral stalk. During catalysis, ATP synthesis in the catalytic domain of F(1) is coupled via a rotary mechanism of the central stalk subunits to proton translocation. In vivo, can only synthesize ATP although its ATP hydrolase activity can be activated artificially in vitro. Part of the complex F(0) domain. This Balaenoptera musculus (Blue whale) protein is ATP synthase F(0) complex subunit 8.